The sequence spans 396 residues: Pyruvate synthase subunit PorA (396 aa).

In terms of assembly, heterotetramer of one alpha, one beta, one delta and one gamma chain.

The enzyme catalyses 2 oxidized [2Fe-2S]-[ferredoxin] + pyruvate + CoA = 2 reduced [2Fe-2S]-[ferredoxin] + acetyl-CoA + CO2 + H(+). The sequence is that of Pyruvate synthase subunit PorA (porA) from Pyrococcus furiosus (strain ATCC 43587 / DSM 3638 / JCM 8422 / Vc1).